Reading from the N-terminus, the 415-residue chain is MTELIKKGSGAKEASQFLAQATTKHKNAALLNLSNDLLIHTATLLQENEKDILRAQQKGTPETMIDRLRLTEERIKEISEAVKQVVALKDPIGEVTNMWKNEAELTIGKTRVPLGVIGIIYESRPNVTVDASVLCFKTGNAVILRGGSDAIDSNKALMSVIQDSLEASGFPRSSVQLIEDTSRETARDMMRLNRFLDVLIPRGGARLIQTVLENATVPVIETGTGNCHIYVDKAAEKQMAIDILVNAKCSRPSVCNAAETLLIHRDVAEDYLPAMETALKEYDVELRADERAKGILQEAKAATESDWEDEFLDFILAIKVVDSAEEAIDHINKYGTKHSEAIISNDYATGQAFHQKVDAAAVYINASTRFTDGFAMGFGAEIGISTQKLHARGPMGLTELTSTKYIIFGDGQIRN.

This sequence belongs to the gamma-glutamyl phosphate reductase family.

The protein localises to the cytoplasm. The catalysed reaction is L-glutamate 5-semialdehyde + phosphate + NADP(+) = L-glutamyl 5-phosphate + NADPH + H(+). It participates in amino-acid biosynthesis; L-proline biosynthesis; L-glutamate 5-semialdehyde from L-glutamate: step 2/2. In terms of biological role, catalyzes the NADPH-dependent reduction of L-glutamate 5-phosphate into L-glutamate 5-semialdehyde and phosphate. The product spontaneously undergoes cyclization to form 1-pyrroline-5-carboxylate. The chain is Gamma-glutamyl phosphate reductase from Listeria monocytogenes serotype 4b (strain F2365).